The primary structure comprises 349 residues: GTP 3',8-cyclase (349 aa).

In terms of domain architecture, Radical SAM core spans 26-245; that stretch reads GFGRAVTYLR…SSFWTLTDIP (220 aa). Arginine 35 provides a ligand contact to GTP. Residues cysteine 42 and cysteine 46 each contribute to the [4Fe-4S] cluster site. Tyrosine 48 lines the S-adenosyl-L-methionine pocket. [4Fe-4S] cluster is bound at residue cysteine 49. Arginine 84 contributes to the GTP binding site. Glycine 88 serves as a coordination point for S-adenosyl-L-methionine. Residue threonine 118 participates in GTP binding. An S-adenosyl-L-methionine-binding site is contributed by serine 142. GTP is bound at residue lysine 178. An S-adenosyl-L-methionine-binding site is contributed by methionine 212. Residues cysteine 275 and cysteine 278 each coordinate [4Fe-4S] cluster. 280–282 is a GTP binding site; it reads RVR. Cysteine 292 lines the [4Fe-4S] cluster pocket.

Belongs to the radical SAM superfamily. MoaA family. Monomer and homodimer. It depends on [4Fe-4S] cluster as a cofactor.

It catalyses the reaction GTP + AH2 + S-adenosyl-L-methionine = (8S)-3',8-cyclo-7,8-dihydroguanosine 5'-triphosphate + 5'-deoxyadenosine + L-methionine + A + H(+). Its pathway is cofactor biosynthesis; molybdopterin biosynthesis. In terms of biological role, catalyzes the cyclization of GTP to (8S)-3',8-cyclo-7,8-dihydroguanosine 5'-triphosphate. The protein is GTP 3',8-cyclase of Caulobacter vibrioides (strain ATCC 19089 / CIP 103742 / CB 15) (Caulobacter crescentus).